Reading from the N-terminus, the 612-residue chain is Dihydroxy-acid dehydratase (612 aa).

Mg(2+) is bound at residue D81. Residue C122 coordinates [2Fe-2S] cluster. Mg(2+) contacts are provided by D123 and K124. K124 bears the N6-carboxylysine mark. C193 contacts [2Fe-2S] cluster. E489 is a Mg(2+) binding site. S515 serves as the catalytic Proton acceptor.

This sequence belongs to the IlvD/Edd family. In terms of assembly, homodimer. Requires [2Fe-2S] cluster as cofactor. It depends on Mg(2+) as a cofactor.

The enzyme catalyses (2R)-2,3-dihydroxy-3-methylbutanoate = 3-methyl-2-oxobutanoate + H2O. It carries out the reaction (2R,3R)-2,3-dihydroxy-3-methylpentanoate = (S)-3-methyl-2-oxopentanoate + H2O. It participates in amino-acid biosynthesis; L-isoleucine biosynthesis; L-isoleucine from 2-oxobutanoate: step 3/4. The protein operates within amino-acid biosynthesis; L-valine biosynthesis; L-valine from pyruvate: step 3/4. Its function is as follows. Functions in the biosynthesis of branched-chain amino acids. Catalyzes the dehydration of (2R,3R)-2,3-dihydroxy-3-methylpentanoate (2,3-dihydroxy-3-methylvalerate) into 2-oxo-3-methylpentanoate (2-oxo-3-methylvalerate) and of (2R)-2,3-dihydroxy-3-methylbutanoate (2,3-dihydroxyisovalerate) into 2-oxo-3-methylbutanoate (2-oxoisovalerate), the penultimate precursor to L-isoleucine and L-valine, respectively. The sequence is that of Dihydroxy-acid dehydratase from Azotobacter vinelandii (strain DJ / ATCC BAA-1303).